A 330-amino-acid chain; its full sequence is D-lactate dehydrogenase (330 aa).

Residues R156–I157, D176, V206–P207, A233–R235, and D259 each bind NAD(+). The active site involves R235. The active site involves E264. The active-site Proton donor is H296.

Belongs to the D-isomer specific 2-hydroxyacid dehydrogenase family.

It carries out the reaction (R)-lactate + NAD(+) = pyruvate + NADH + H(+). The polypeptide is D-lactate dehydrogenase (ldhD) (Staphylococcus aureus).